Here is a 519-residue protein sequence, read N- to C-terminus: Seed lectin (519 aa).

Disulfide bonds link Cys249–Cys258 and Cys274–Cys293. 2 Ricin B-type lectin domains span residues 261 to 387 (ETRT…WRVG) and 390 to 518 (VQPI…WVLF). The 1-alpha repeat unit spans residues 271-311 (DALCVDVAGALTSDGSRLILYPCGQQVNQKWTFHSDGTVRS). A carbohydrate contacts are provided by residues 276 to 279 (DVAG) and 296 to 298 (QVN). The 1-beta repeat unit spans residues 312–352 (LGKCLATNNSKFGNLVVIYDCSKLAAEDISWDVSVGGTIMN). Cys315 and Cys332 are joined by a disulfide. The 1-gamma repeat unit spans residues 356 to 388 (EDLALTSNKATRSTNLTMEVNTYSASQGWRVGN). Asn370 carries N-linked (GlcNAc...) asparagine glycosylation. A 2-alpha repeat occupies 401–438 (DDMCLEATDGNTNMWLEECVPNQREQSWALYSDGTIRV). Intrachain disulfides connect Cys404–Cys419 and Cys445–Cys464. Residues 442–482 (RELCVTASSSTYDNWKVITILNCDGSNNQRWVFLADGSIST) form a 2-beta repeat. A carbohydrate-binding positions include Asp454, 491–494 (DVAR), 505–508 (HRPH), and Asn512. Residues 486–513 (QRLAMDVARSDVDLKKIILHRPHGDLNQ) form a 2-gamma repeat.

In the N-terminal section; belongs to the ribosome-inactivating protein family. Type 2 RIP subfamily. In terms of assembly, heterotrimer consisting of Aalpha, Abeta and B chains with Abeta and B being disulfide-linked.

Its function is as follows. Seed lectin similar to type 2 ribosome-inactivating proteins. The Aalpha and Abeta chains constitute the rRNA glycosidase domain and the B chain the carbohydrate-binding lectin domain. Is predicted to have no glycosidase activity and, hence, to be non-toxic, due to small changes in both the nucleotide binding and carbohydrate binding capabilities. Binds galactose and derivatives with a preference for the beta-anomeric forms. Binds prophyrins. Has hemagglutinating activity towards rabbit and human erythrocytes. This Trichosanthes anguina (Snake gourd) protein is Seed lectin.